The sequence spans 427 residues: Cryptic catabolic NAD-specific glutamate dehydrogenase GudB (427 aa).

The substrate site is built by Lys-80 and Lys-107. Lys-119 acts as the Proton donor in catalysis. Residues Thr-203 and Asn-234 each coordinate NAD(+). Substrate is bound at residue Ser-361.

This sequence belongs to the Glu/Leu/Phe/Val dehydrogenases family. Homohexamer.

The enzyme catalyses L-glutamate + NAD(+) + H2O = 2-oxoglutarate + NH4(+) + NADH + H(+). GudB seems to be intrinsically inactive, however spontaneous mutations removing a 9-bp direct repeat within the wild-type gudB sequence activated the GudB protein and allowed more-efficient utilization of amino acids of the glutamate family (called gutB1). This 3 amino acid insertion presumably causes severe destabilization of the fold of the protein, leading to an inactive enzyme that is very quickly degraded. The cryptic GudB serves as a buffer that may compensate for mutations in the rocG gene and that can also be decryptified for the utilization of glutamate as a single carbon source in the absence of arginine. It is unable to synthesize glutamate. This chain is Cryptic catabolic NAD-specific glutamate dehydrogenase GudB, found in Bacillus subtilis (strain 168).